We begin with the raw amino-acid sequence, 107 residues long: Sperm protamine P1 (107 aa).

Composition is skewed to basic and acidic residues over residues A1–F10 and R20–G33. Residues A1–G35 constitute a propeptide, removed in mature form. The segment at A1–K107 is disordered. Over residues H34–K107 the composition is skewed to basic residues. S42 carries the post-translational modification Phosphoserine.

Post-translationally, a series of N-terminal cleavages yield the mature protein. In terms of processing, only the mature protein is phosphorylated. In terms of tissue distribution, gonads.

The protein localises to the nucleus. It localises to the chromosome. Functionally, protamines substitute for histones in the chromatin of sperm during the haploid phase of spermatogenesis. They compact sperm DNA into a highly condensed, stable and inactive complex. The sequence is that of Sperm protamine P1 from Bolinus brandaris (Purple dye murex).